Consider the following 320-residue polypeptide: 4-diphosphocytidyl-2-C-methyl-D-erythritol kinase (320 aa).

Residue K20 is part of the active site. 112 to 122 is a binding site for ATP; sequence PVAGGMGGGSA. Residue D154 is part of the active site.

This sequence belongs to the GHMP kinase family. IspE subfamily.

It carries out the reaction 4-CDP-2-C-methyl-D-erythritol + ATP = 4-CDP-2-C-methyl-D-erythritol 2-phosphate + ADP + H(+). The protein operates within isoprenoid biosynthesis; isopentenyl diphosphate biosynthesis via DXP pathway; isopentenyl diphosphate from 1-deoxy-D-xylulose 5-phosphate: step 3/6. Functionally, catalyzes the phosphorylation of the position 2 hydroxy group of 4-diphosphocytidyl-2C-methyl-D-erythritol. The protein is 4-diphosphocytidyl-2-C-methyl-D-erythritol kinase of Pseudarthrobacter chlorophenolicus (strain ATCC 700700 / DSM 12829 / CIP 107037 / JCM 12360 / KCTC 9906 / NCIMB 13794 / A6) (Arthrobacter chlorophenolicus).